A 105-amino-acid chain; its full sequence is UPF0145 protein lpp0255 (105 aa).

Belongs to the UPF0145 family.

In Legionella pneumophila (strain Paris), this protein is UPF0145 protein lpp0255.